The following is a 380-amino-acid chain: Chaperone protein DnaJ (380 aa).

The 65-residue stretch at 5–69 folds into the J domain; sequence DYYEILGVSK…QKRAHYDQFG (65 aa). Residues 135 to 217 form a CR-type zinc finger; that stretch reads GKETDIEIPR…CGGTGRVKKR (83 aa). Cys148, Cys151, Cys165, Cys168, Cys191, Cys194, Cys205, and Cys208 together coordinate Zn(2+). 4 CXXCXGXG motif repeats span residues 148–155, 165–172, 191–198, and 205–212; these read CDTCHGTG, CSYCHGTG, CPYCGGTG, and CTTCGGTG.

The protein belongs to the DnaJ family. As to quaternary structure, homodimer. The cofactor is Zn(2+).

The protein resides in the cytoplasm. Its function is as follows. Participates actively in the response to hyperosmotic and heat shock by preventing the aggregation of stress-denatured proteins and by disaggregating proteins, also in an autonomous, DnaK-independent fashion. Unfolded proteins bind initially to DnaJ; upon interaction with the DnaJ-bound protein, DnaK hydrolyzes its bound ATP, resulting in the formation of a stable complex. GrpE releases ADP from DnaK; ATP binding to DnaK triggers the release of the substrate protein, thus completing the reaction cycle. Several rounds of ATP-dependent interactions between DnaJ, DnaK and GrpE are required for fully efficient folding. Also involved, together with DnaK and GrpE, in the DNA replication of plasmids through activation of initiation proteins. The sequence is that of Chaperone protein DnaJ from Geobacillus sp. (strain WCH70).